The primary structure comprises 384 residues: MDAATLTYDTLRFADTPDFPETAEPVWVLGRKYSALTEKEQLLNDITSRLWFTYRRNFQAIGGTGPTSDTGWGCMLRCGQMIFAQALICRHVGRDWRWDKQKPKGEYLNILTAFLDKKDSYYSIHQIAQMGVGEGKYIGQWYGPNTVAQVLRKLAVFDQWSSIAVHIAMDNTVVVDEIRRLCRAGSGESSDAGALSNGYTGDSDPSCAQWKPLVLLIPLRLGLSEINEAYIETLKHCFMVPQSLGVIGGRPNSAHYFIGYVGDELIYLDPHTTQLSVEPSDCSFIEDESFHCQHPPCRMHVSEIDPSIAVGFFCSSQEDFEDWCQHIKKLSLSGGALPMFEVVDQLPLHLSNPDVLNLTPDSSDADRLDRFFDSEDEEFEILSL.

The Nucleophile role is filled by C74. Active-site residues include D269 and H271. Positions F379–L382 match the LIR motif.

The protein belongs to the peptidase C54 family.

The protein localises to the cytoplasm. It localises to the cytosol. It is found in the cytoplasmic vesicle. Its subcellular location is the autophagosome. The protein resides in the endoplasmic reticulum. The protein localises to the mitochondrion. The catalysed reaction is [protein]-C-terminal L-amino acid-glycyl-phosphatidylethanolamide + H2O = [protein]-C-terminal L-amino acid-glycine + a 1,2-diacyl-sn-glycero-3-phosphoethanolamine. It catalyses the reaction [protein]-C-terminal L-amino acid-glycyl-phosphatidylserine + H2O = [protein]-C-terminal L-amino acid-glycine + a 1,2-diacyl-sn-glycero-3-phospho-L-serine. Functionally, cysteine protease that plays a key role in autophagy by mediating both proteolytic activation and delipidation of ATG8 family proteins. Required for canonical autophagy (macroautophagy), non-canonical autophagy as well as for mitophagy. The protease activity is required for proteolytic activation of ATG8 family proteins: cleaves the C-terminal amino acid of ATG8 proteins to reveal a C-terminal glycine. Exposure of the glycine at the C-terminus is essential for ATG8 proteins conjugation to phosphatidylethanolamine (PE) and insertion to membranes, which is necessary for autophagy. Protease activity is also required to counteract formation of high-molecular weight conjugates of ATG8 proteins (ATG8ylation): acts as a deubiquitinating-like enzyme that removes ATG8 conjugated to other proteins, such as ATG3. In addition to the protease activity, also mediates delipidation of ATG8 family proteins. Catalyzes delipidation of PE-conjugated forms of ATG8 proteins during macroautophagy. Also involved in non-canonical autophagy, a parallel pathway involving conjugation of ATG8 proteins to single membranes at endolysosomal compartments, by catalyzing delipidation of ATG8 proteins conjugated to phosphatidylserine (PS). In Xenopus laevis (African clawed frog), this protein is Cysteine protease ATG4B.